Reading from the N-terminus, the 182-residue chain is MQLNIPTWLTLFRVVLIPFFVLAFYLPFVWAPMVCAIIFVFAAATDWFDGFLARRWKQTTRFGAFLDPVADKVMVAVALVLVAEHYHSWWITLPAATMIAREIIISSLREWMAEIGKRSSVAVSWVGKVKTMAQMGSLVGLLWRPDHNVELASFVLLYIAAVLTFWSMFQYLNAAWSDLLEP.

Over 1-12 (MQLNIPTWLTLF) the chain is Cytoplasmic. The helical transmembrane segment at 13–37 (RVVLIPFFVLAFYLPFVWAPMVCAI) threads the bilayer. Over 38 to 60 (IFVFAAATDWFDGFLARRWKQTT) the chain is Periplasmic. The helical transmembrane segment at 61–81 (RFGAFLDPVADKVMVAVALVL) threads the bilayer. The Cytoplasmic portion of the chain corresponds to 82 to 86 (VAEHY). A helical membrane pass occupies residues 87–107 (HSWWITLPAATMIAREIIISS). Residues 108–145 (LREWMAEIGKRSSVAVSWVGKVKTMAQMGSLVGLLWRP) are Periplasmic-facing. The helical transmembrane segment at 146–168 (DHNVELASFVLLYIAAVLTFWSM) threads the bilayer. Residues 169–181 (FQYLNAAWSDLLE) lie on the Cytoplasmic side of the membrane.

This sequence belongs to the CDP-alcohol phosphatidyltransferase class-I family.

It is found in the cell inner membrane. The enzyme catalyses a CDP-1,2-diacyl-sn-glycerol + sn-glycerol 3-phosphate = a 1,2-diacyl-sn-glycero-3-phospho-(1'-sn-glycero-3'-phosphate) + CMP + H(+). It participates in phospholipid metabolism; phosphatidylglycerol biosynthesis; phosphatidylglycerol from CDP-diacylglycerol: step 1/2. Catalyzes the conversion of cytidine diphosphate diacylglycerol (CDP-DG) and glycerol 3-phosphate into phosphatidylglycerol. Essential for the synthesis of anionic phospholipids, thereby playing a role in balancing the ratio of zwitterionic and anionic phospholipids, which is thought to be important for normal membrane function. This chain is CDP-diacylglycerol--glycerol-3-phosphate 3-phosphatidyltransferase, found in Yersinia pestis bv. Antiqua (strain Antiqua).